The sequence spans 179 residues: Bifunctional protein PyrR (179 aa).

The PRPP-binding motif lies at 99–111 (VILIDDVLYTGRT).

It belongs to the purine/pyrimidine phosphoribosyltransferase family. PyrR subfamily. As to quaternary structure, homodimer and homohexamer; in equilibrium.

The enzyme catalyses UMP + diphosphate = 5-phospho-alpha-D-ribose 1-diphosphate + uracil. Functionally, regulates transcriptional attenuation of the pyrimidine nucleotide (pyr) operon by binding in a uridine-dependent manner to specific sites on pyr mRNA. This disrupts an antiterminator hairpin in the RNA and favors formation of a downstream transcription terminator, leading to a reduced expression of downstream genes. Its function is as follows. Also displays a weak uracil phosphoribosyltransferase activity which is not physiologically significant. The polypeptide is Bifunctional protein PyrR (Latilactobacillus sakei subsp. sakei (strain 23K) (Lactobacillus sakei subsp. sakei)).